Consider the following 197-residue polypeptide: Peptide deformylase (197 aa).

The Fe cation site is built by C106 and H148. E149 is an active-site residue. H152 contributes to the Fe cation binding site.

This sequence belongs to the polypeptide deformylase family. It depends on Fe(2+) as a cofactor.

The enzyme catalyses N-terminal N-formyl-L-methionyl-[peptide] + H2O = N-terminal L-methionyl-[peptide] + formate. Functionally, removes the formyl group from the N-terminal Met of newly synthesized proteins. Requires at least a dipeptide for an efficient rate of reaction. N-terminal L-methionine is a prerequisite for activity but the enzyme has broad specificity at other positions. The sequence is that of Peptide deformylase from Mycobacterium leprae (strain TN).